The following is a 188-amino-acid chain: FMN reductase (NADH) RutF (188 aa).

Belongs to the non-flavoprotein flavin reductase family. RutF subfamily.

The enzyme catalyses FMNH2 + NAD(+) = FMN + NADH + 2 H(+). Its function is as follows. Catalyzes the reduction of FMN to FMNH2 which is used to reduce pyrimidine by RutA via the Rut pathway. The sequence is that of FMN reductase (NADH) RutF from Acinetobacter baylyi (strain ATCC 33305 / BD413 / ADP1).